The primary structure comprises 438 residues: Transcription termination factor Rho (438 aa).

In terms of domain architecture, Rho RNA-BD spans 70–145 (YILFTGILEI…LKIEAINYLP (76 aa)). ATP contacts are provided by residues 188–193 (GKGQRA), 200–205 (RTGKTE), and Arg231.

The protein belongs to the Rho family. In terms of assembly, homohexamer. The homohexamer assembles into an open ring structure.

In terms of biological role, facilitates transcription termination by a mechanism that involves Rho binding to the nascent RNA, activation of Rho's RNA-dependent ATPase activity, and release of the mRNA from the DNA template. The chain is Transcription termination factor Rho from Helicobacter pylori (strain J99 / ATCC 700824) (Campylobacter pylori J99).